A 76-amino-acid polypeptide reads, in one-letter code: Omega/Kappa-hexatoxin-Hv1h (76 aa).

Positions 1 to 22 are cleaved as a signal peptide; it reads MNTATGFIVLLVLATILGGIEA. The propeptide occupies 23-35; sequence GESHMRKDAMGRV. Intrachain disulfides connect Cys40–Cys55, Cys47–Cys60, and Cys54–Cys74.

This sequence belongs to the neurotoxin 08 (Shiva) family. 02 (omega/kappa toxin) subfamily. In terms of tissue distribution, expressed by the venom gland.

It is found in the secreted. Functionally, toxin that may inhibit ion channels. This Hadronyche versuta (Blue mountains funnel-web spider) protein is Omega/Kappa-hexatoxin-Hv1h.